Reading from the N-terminus, the 304-residue chain is RING-H2 finger protein ATL2 (304 aa).

A helical transmembrane segment spans residues 30 to 50; the sequence is IMLSAIVILFFVVILMVFLHL. The RING-type; atypical zinc finger occupies 119 to 161; it reads CAVCLSEFEESETGRVLPNCQHTFHVDCIDMWFHSHSTCPLCR. Residues 194–304 are disordered; that stretch reads EPSSSSGLTD…DIERGGEESR (111 aa). Residues 227–244 show a composition bias toward basic and acidic residues; that stretch reads VPRRTFSEFEDELTRRDS. A compositionally biased stretch (polar residues) spans 283 to 293; it reads PTLSCRIQMTE. Residues 295–304 show a composition bias toward basic and acidic residues; that stretch reads DIERGGEESR.

Belongs to the RING-type zinc finger family. ATL subfamily. As to expression, preferentially expressed around the apical meristem region.

Its subcellular location is the membrane. It carries out the reaction S-ubiquitinyl-[E2 ubiquitin-conjugating enzyme]-L-cysteine + [acceptor protein]-L-lysine = [E2 ubiquitin-conjugating enzyme]-L-cysteine + N(6)-ubiquitinyl-[acceptor protein]-L-lysine.. It participates in protein modification; protein ubiquitination. In terms of biological role, may be involved in the early steps of the plant defense signaling pathway. The sequence is that of RING-H2 finger protein ATL2 (ATL2) from Arabidopsis thaliana (Mouse-ear cress).